The primary structure comprises 508 residues: 3-octaprenyl-4-hydroxybenzoate carboxy-lyase (508 aa).

Mn(2+) is bound at residue Asn172. Residues Ile175–Arg177, Arg189–Leu191, and Arg194–Gly195 each bind prenylated FMN. Glu238 provides a ligand contact to Mn(2+). The active-site Proton donor is the Asp287. Residues Gly483–Val508 are disordered. Basic and acidic residues predominate over residues Pro498–Val508.

It belongs to the UbiD family. Homohexamer. Prenylated FMN is required as a cofactor. Requires Mn(2+) as cofactor.

It is found in the cell membrane. It carries out the reaction a 4-hydroxy-3-(all-trans-polyprenyl)benzoate + H(+) = a 2-(all-trans-polyprenyl)phenol + CO2. The protein operates within cofactor biosynthesis; ubiquinone biosynthesis. In terms of biological role, catalyzes the decarboxylation of 3-octaprenyl-4-hydroxy benzoate to 2-octaprenylphenol, an intermediate step in ubiquinone biosynthesis. The sequence is that of 3-octaprenyl-4-hydroxybenzoate carboxy-lyase from Chromohalobacter salexigens (strain ATCC BAA-138 / DSM 3043 / CIP 106854 / NCIMB 13768 / 1H11).